The following is a 558-amino-acid chain: Magnesium-chelatase 60 kDa subunit (558 aa).

Disordered stretches follow at residues 234–268 and 298–325; these read MPAS…GEEM and MARG…MGRL. Residues 240–254 are compositionally biased toward acidic residues; sequence APPEPEPEPPEDQPD. Over residues 298–308 the composition is skewed to low complexity; that stretch reads MARGATGTGSA. The region spanning 376–555 is the VWFA domain; that stretch reads VLIFAVDASG…HKLSNVLGAA (180 aa).

Belongs to the Mg-chelatase subunits D/I family.

The catalysed reaction is protoporphyrin IX + Mg(2+) + ATP + H2O = Mg-protoporphyrin IX + ADP + phosphate + 3 H(+). The protein operates within porphyrin-containing compound metabolism; bacteriochlorophyll biosynthesis. In terms of biological role, involved in bacteriochlorophyll biosynthesis; introduces a magnesium ion into protoporphyrin IX to yield Mg-protoporphyrin IX. The chain is Magnesium-chelatase 60 kDa subunit (bchD) from Cereibacter sphaeroides (strain ATCC 17023 / DSM 158 / JCM 6121 / CCUG 31486 / LMG 2827 / NBRC 12203 / NCIMB 8253 / ATH 2.4.1.) (Rhodobacter sphaeroides).